Consider the following 543-residue polypeptide: Aluminum-activated malate transporter 14 (543 aa).

The next 6 helical transmembrane spans lie at 56 to 76 (VGVS…FKGI), 80 to 100 (AIWA…ATLC), 106 to 126 (GLGT…ANDS), 129 to 149 (IFRA…ITYL), 164 to 184 (LIFL…DTVI), and 191 to 211 (FYTI…VFPI). The disordered stretch occupies residues 416 to 438 (DTNEAASYQNTGTPRGERMSRFG). Polar residues predominate over residues 419 to 428 (EAASYQNTGT). Residues 445–472 (RLRADTLERRSAAATNERKILRQQLSRI) are a coiled coil.

Belongs to the aromatic acid exporter (TC 2.A.85) family.

It localises to the membrane. Malate transporter. This chain is Aluminum-activated malate transporter 14 (ALMT14), found in Arabidopsis thaliana (Mouse-ear cress).